Consider the following 231-residue polypeptide: NADH-ubiquinone oxidoreductase chain 4 (231 aa).

A run of 6 helical transmembrane segments spans residues 1–21 (PIAG…YGII), 34–54 (MFLP…LTCL), 63–85 (IAYS…TPWG), 89–111 (AMAL…NTTY), 128–148 (ILPM…ATPP), and 156–176 (LLIM…LGLS).

This sequence belongs to the complex I subunit 4 family.

The protein localises to the mitochondrion membrane. The enzyme catalyses a ubiquinone + NADH + 5 H(+)(in) = a ubiquinol + NAD(+) + 4 H(+)(out). Functionally, core subunit of the mitochondrial membrane respiratory chain NADH dehydrogenase (Complex I) that is believed to belong to the minimal assembly required for catalysis. Complex I functions in the transfer of electrons from NADH to the respiratory chain. The immediate electron acceptor for the enzyme is believed to be ubiquinone. This is NADH-ubiquinone oxidoreductase chain 4 (MT-ND4) from Trimeresurus stejnegeri (Chinese green tree viper).